Here is a 216-residue protein sequence, read N- to C-terminus: UPF0502 protein VC0395_0676/VC395_A0574 (216 aa).

Belongs to the UPF0502 family.

The chain is UPF0502 protein VC0395_0676/VC395_A0574 from Vibrio cholerae serotype O1 (strain ATCC 39541 / Classical Ogawa 395 / O395).